A 687-amino-acid chain; its full sequence is Putative secreted metallopeptidase (687 aa).

The N-terminal stretch at Met1–Ala22 is a signal peptide. Asn54, Asn114, Asn252, Asn256, and Asn379 each carry an N-linked (GlcNAc...) asparagine glycan.

The protein belongs to the peptidase M10B family.

It localises to the secreted. The polypeptide is Putative secreted metallopeptidase (Arthroderma benhamiae (strain ATCC MYA-4681 / CBS 112371) (Trichophyton mentagrophytes)).